The chain runs to 338 residues: Aspartate-semialdehyde dehydrogenase (338 aa).

NADP(+) contacts are provided by residues 9-12 (TGQV) and 37-38 (RS). R93 contacts phosphate. Catalysis depends on C123, which acts as the Acyl-thioester intermediate. Q150 is a substrate binding site. 153–154 (SG) contributes to the NADP(+) binding site. K220 lines the phosphate pocket. R242 provides a ligand contact to substrate. H249 acts as the Proton acceptor in catalysis. N316 serves as a coordination point for NADP(+).

The protein belongs to the aspartate-semialdehyde dehydrogenase family. Homodimer.

The enzyme catalyses L-aspartate 4-semialdehyde + phosphate + NADP(+) = 4-phospho-L-aspartate + NADPH + H(+). Its pathway is amino-acid biosynthesis; L-lysine biosynthesis via DAP pathway; (S)-tetrahydrodipicolinate from L-aspartate: step 2/4. The protein operates within amino-acid biosynthesis; L-methionine biosynthesis via de novo pathway; L-homoserine from L-aspartate: step 2/3. It participates in amino-acid biosynthesis; L-threonine biosynthesis; L-threonine from L-aspartate: step 2/5. Catalyzes the NADPH-dependent formation of L-aspartate-semialdehyde (L-ASA) by the reductive dephosphorylation of L-aspartyl-4-phosphate. In Streptomyces akiyoshiensis, this protein is Aspartate-semialdehyde dehydrogenase.